A 223-amino-acid polypeptide reads, in one-letter code: ATP phosphoribosyltransferase (223 aa).

It belongs to the ATP phosphoribosyltransferase family. Short subfamily. In terms of assembly, heteromultimer composed of HisG and HisZ subunits.

Its subcellular location is the cytoplasm. The catalysed reaction is 1-(5-phospho-beta-D-ribosyl)-ATP + diphosphate = 5-phospho-alpha-D-ribose 1-diphosphate + ATP. Its pathway is amino-acid biosynthesis; L-histidine biosynthesis; L-histidine from 5-phospho-alpha-D-ribose 1-diphosphate: step 1/9. Catalyzes the condensation of ATP and 5-phosphoribose 1-diphosphate to form N'-(5'-phosphoribosyl)-ATP (PR-ATP). Has a crucial role in the pathway because the rate of histidine biosynthesis seems to be controlled primarily by regulation of HisG enzymatic activity. In Desulfitobacterium hafniense (strain Y51), this protein is ATP phosphoribosyltransferase.